Here is a 616-residue protein sequence, read N- to C-terminus: KIF-binding protein (616 aa).

The disordered stretch occupies residues 52 to 78; it reads EEEEESEAEGKEERRDGPESGGRRGES. Residues 59-78 show a composition bias toward basic and acidic residues; the sequence is AEGKEERRDGPESGGRRGES.

This sequence belongs to the KIF-binding protein family.

It localises to the cytoplasm. Its subcellular location is the cytoskeleton. Functionally, activator of KIF1B plus-end-directed microtubule motor activity. Required for organization of axonal microtubules, and axonal outgrowth and maintenance during peripheral and central nervous system development. This Xenopus tropicalis (Western clawed frog) protein is KIF-binding protein.